The primary structure comprises 635 residues: Elongation factor 4 (635 aa).

The region spanning 11 to 193 (EKIRNFSIIA…QIVEKVPAPT (183 aa)) is the tr-type G domain. GTP-binding positions include 23 to 28 (DHGKST) and 140 to 143 (NKID).

It belongs to the TRAFAC class translation factor GTPase superfamily. Classic translation factor GTPase family. LepA subfamily.

It localises to the cell membrane. It carries out the reaction GTP + H2O = GDP + phosphate + H(+). In terms of biological role, required for accurate and efficient protein synthesis under certain stress conditions. May act as a fidelity factor of the translation reaction, by catalyzing a one-codon backward translocation of tRNAs on improperly translocated ribosomes. Back-translocation proceeds from a post-translocation (POST) complex to a pre-translocation (PRE) complex, thus giving elongation factor G a second chance to translocate the tRNAs correctly. Binds to ribosomes in a GTP-dependent manner. The polypeptide is Elongation factor 4 (Streptococcus pyogenes serotype M12 (strain MGAS2096)).